The chain runs to 270 residues: Tryptophan synthase alpha chain (270 aa).

Residues Glu-49 and Asp-60 each act as proton acceptor in the active site.

It belongs to the TrpA family. Tetramer of two alpha and two beta chains.

It carries out the reaction (1S,2R)-1-C-(indol-3-yl)glycerol 3-phosphate + L-serine = D-glyceraldehyde 3-phosphate + L-tryptophan + H2O. Its pathway is amino-acid biosynthesis; L-tryptophan biosynthesis; L-tryptophan from chorismate: step 5/5. In terms of biological role, the alpha subunit is responsible for the aldol cleavage of indoleglycerol phosphate to indole and glyceraldehyde 3-phosphate. The polypeptide is Tryptophan synthase alpha chain (Paraburkholderia phytofirmans (strain DSM 17436 / LMG 22146 / PsJN) (Burkholderia phytofirmans)).